The chain runs to 329 residues: Sex comb on midleg-like protein 1 (329 aa).

Phosphoserine occurs at positions 138 and 238. Residues Ser-138 to Pro-157 are disordered. An SAM domain is found at Trp-258–Lys-325.

The protein belongs to the SCM family.

Its subcellular location is the nucleus. Putative Polycomb group (PcG) protein. PcG proteins act by forming multiprotein complexes, which are required to maintain the transcriptionally repressive state of homeotic genes throughout development. May be involved in spermatogenesis during sexual maturation. The chain is Sex comb on midleg-like protein 1 (SCML1) from Gorilla gorilla gorilla (Western lowland gorilla).